Here is a 443-residue protein sequence, read N- to C-terminus: D-inositol 3-phosphate glycosyltransferase (443 aa).

His-30 serves as a coordination point for 1D-myo-inositol 3-phosphate. UDP-N-acetyl-alpha-D-glucosamine-binding positions include 36–37 and Gly-44; that span reads QP. 1D-myo-inositol 3-phosphate-binding positions include 41–46, Lys-99, Tyr-132, Thr-156, and Arg-176; that span reads DAGGMN. 3 residues coordinate UDP-N-acetyl-alpha-D-glucosamine: Arg-250, Lys-255, and Arg-316. Mg(2+) contacts are provided by Phe-325, Arg-326, and Cys-328. Residues Glu-338 and Glu-346 each coordinate UDP-N-acetyl-alpha-D-glucosamine. Thr-352 serves as a coordination point for Mg(2+).

This sequence belongs to the glycosyltransferase group 1 family. MshA subfamily. As to quaternary structure, homodimer.

The catalysed reaction is 1D-myo-inositol 3-phosphate + UDP-N-acetyl-alpha-D-glucosamine = 1D-myo-inositol 2-acetamido-2-deoxy-alpha-D-glucopyranoside 3-phosphate + UDP + H(+). Functionally, catalyzes the transfer of a N-acetyl-glucosamine moiety to 1D-myo-inositol 3-phosphate to produce 1D-myo-inositol 2-acetamido-2-deoxy-glucopyranoside 3-phosphate in the mycothiol biosynthesis pathway. The chain is D-inositol 3-phosphate glycosyltransferase from Stackebrandtia nassauensis (strain DSM 44728 / CIP 108903 / NRRL B-16338 / NBRC 102104 / LLR-40K-21).